Here is an 88-residue protein sequence, read N- to C-terminus: M-zodatoxin-Lt1a (88 aa).

The first 22 residues, 1–22 (MKYFVVALALAVALVCIAESTA), serve as a signal peptide directing secretion. Residues 23-62 (YDVNEELENELDDLSDAAWLAKAAEDLQALDDFEESEESR) constitute a propeptide that is removed on maturation. The short motif at 59-62 (EESR) is the Processing quadruplet motif element.

In terms of processing, cleavage of the propeptide depends on the processing quadruplet motif (XXXR, with at least one of X being E). Expressed by the venom gland.

It is found in the secreted. In terms of biological role, has antimicrobial activity against Gram-positive bacteria (A.globiformis VKM Ac-1112 (MIC=0.5 uM), and B.subtilis VKM B-501 (MIC=1.0 uM)), Gram-negative bacteria (E.coli DH5-alpha (MIC=1.0 uM), E.coli MH1 (MIC=0.7 uM), and P.aeruginosa PAO1 (MIC=4.1 uM)), and yeasts (P.pastoris GS115 (MIC=17 uM), and S.cerevisiae Y190 (MIC&gt;33 uM)). Has a moderate hemolytic activity against rabbit erythrocytes. Causes paralysis, but is not lethal when injected into insect (M.domestica) larvae. The sequence is that of M-zodatoxin-Lt1a from Lachesana tarabaevi (Spider).